Reading from the N-terminus, the 686-residue chain is Leucine-rich repeat-containing protein 49 (686 aa).

7 LRR repeats span residues 113-134 (HLRL…SNLQ), 135-156 (RLIF…STLK), 157-178 (SLRV…ENLK), 179-200 (NLDV…NHLC), 201-222 (DLRV…NGLD), 223-244 (SLTE…DNLP), and 245-266 (CLQR…SCLA). The LRRCT domain occupies 279 to 317 (NPIAQESWYKHTVLQNMMQLRQLDMKRITEEERRVASVV). Disordered regions lie at residues 311–332 (RRVA…HKQS) and 359–381 (ASTQ…DGGN). Residues 319 to 341 (KKEEEKKRESHKQSLLKEKKRLT) adopt a coiled-coil conformation.

As to quaternary structure, part of the neuronal tubulin polyglutamylase complex which contains TPGS1, TPGS2, TTLL1, LRRC49 and NICN1. Interacts with PCM1; TTLL1, TPGS1, TPGS2 and LRRC49.

Its subcellular location is the cytoplasm. It localises to the cytoskeleton. The protein localises to the microtubule organizing center. The protein resides in the centrosome. It is found in the centriolar satellite. Its function is as follows. Subunit of the tubulin polyglutamylase complex (TPGC). The complex mediates cilia and flagella polyglutamylation which is essential for their biogenesis and motility. The polypeptide is Leucine-rich repeat-containing protein 49 (Lrrc49) (Mus musculus (Mouse)).